The chain runs to 447 residues: Tryptophan 5-hydroxylase 1 (447 aa).

Residues 22–97 form the ACT domain; that stretch reads TLIFSLENEV…TVLSVDSPDQ (76 aa). Phosphoserine; by PKA is present on Ser-61. Positions 238, 260, and 268 each coordinate L-tryptophan. Fe cation-binding residues include His-275, His-280, and Glu-320. Residues Ser-339 and Ile-369 each coordinate L-tryptophan.

This sequence belongs to the biopterin-dependent aromatic amino acid hydroxylase family. In terms of assembly, homotetramer. Interacts with DNAJC12. Fe(2+) is required as a cofactor. In terms of processing, ubiquitinated, leading to its degradation by the proteasome. Ubiquitinated is triggered by phosphorylation. Phosphorylated; triggering degradation by the proteasome.

The enzyme catalyses (6R)-L-erythro-5,6,7,8-tetrahydrobiopterin + L-tryptophan + O2 = 5-hydroxy-L-tryptophan + (4aS,6R)-4a-hydroxy-L-erythro-5,6,7,8-tetrahydrobiopterin. It participates in aromatic compound metabolism; serotonin biosynthesis; serotonin from L-tryptophan: step 1/2. Its function is as follows. Oxidizes L-tryptophan to 5-hydroxy-l-tryptophan in the rate-determining step of serotonin biosynthesis. The polypeptide is Tryptophan 5-hydroxylase 1 (Mus musculus (Mouse)).